Reading from the N-terminus, the 2587-residue chain is Fap1 adhesin (2587 aa).

The signal sequence occupies residues 1 to 85; it reads MGKYKRAGET…ATVVSGNVFA (85 aa). Disordered regions lie at residues 107-158, 173-212, 515-539, and 568-2558; these read SSEN…SESV, SISE…DSVR, DSIP…KSIS, and ESIT…GENV. The ser-rich region 1, SRR1 stretch occupies residues 107–195; it reads SSENFDSEKA…IVLSESGAAS (89 aa). 2 stretches are compositionally biased toward low complexity: residues 121-158 and 173-191; these read SLSQ…SESV and SISE…LSES. A sufficient to block adherence to beads region spans residues 191 to 522; the sequence is SGAASGNKAT…NADSIPSDTT (332 aa). Residues 192-202 are compositionally biased toward polar residues; sequence GAASGNKATSK. The segment covering 203–212 has biased composition (basic and acidic residues); the sequence is GTEEKQDSVR. A ser-rich region 2, SRR2 region spans residues 516–2561; that stretch reads SIPSDTTSQS…PNTGENVSSS (2046 aa). Composition is skewed to low complexity over residues 519-539 and 568-2545; these read SDTT…KSIS and ESIT…VSES. Residues 2367–2587 form a required for localization to cell wall, fimbriae formation and adherence to saliva-coated hydroxyapatite beads (SHA) but not secretion region; it reads SESISESVSE…RKKRKSEDAE (221 aa). The LPXTG sorting signal signature appears at 2551–2555; sequence LPNTG. The residue at position 2554 (T2554) is a Pentaglycyl murein peptidoglycan amidated threonine. Residues 2555-2587 constitute a propeptide, removed by sortase; that stretch reads GENVSSSLGLVGLSGLLFGALLGRKKRKSEDAE.

This sequence belongs to the serine-rich repeat protein (SRRP) family. Glycosylated; occurs within the cytoplasm. It is probable that most of the Ser residues in SSR1 and SSR2 are O-GlcNAcylated. Sequential glycosylation by sugar transferases are able to generate complex sugar polymorphisms.

It is found in the cytoplasm. The protein resides in the secreted. It localises to the cell wall. The protein localises to the fimbrium. The major structural element of fimbriae. Required for adherence to saliva-coated hydroxyapatite beads (SHA), an in vitro tooth model. A Fap1-dependent increase in adherence is seen as the pH is reduced from pH 8 to pH 5. The polypeptide is Fap1 adhesin (fap1) (Streptococcus parasanguinis).